Reading from the N-terminus, the 420-residue chain is F-box protein At5g07610 (420 aa).

Residues 1-25 (MSSCSRTRTKAPRSARSRRNGGFSS) are disordered. Residues 7–19 (TRTKAPRSARSRR) are compositionally biased toward basic residues. In terms of domain architecture, F-box spans 27–77 (SATIVADIDDVLIQILSFLPIKTLLRFKRVSKRWLSLITNPVFSNRVIKSN).

This Arabidopsis thaliana (Mouse-ear cress) protein is F-box protein At5g07610.